The following is a 745-amino-acid chain: Multiple C2 domain and transmembrane region protein 13 (745 aa).

Residues 1–30 are disordered; the sequence is MAANKDEFSVKQISPKLGGERGARNPYGPT. 3 consecutive C2 domains span residues 21 to 139, 171 to 293, and 326 to 453; these read RGAR…PQRY, DASE…SAPA, and AEES…ACSY. 4 residues coordinate Ca(2+): D56, D61, D106, and N110. Transmembrane regions (helical) follow at residues 568 to 588 and 688 to 708; these read SLIV…LVGL and FYCW…PMWL.

This sequence belongs to the MCTP family. Ca(2+) is required as a cofactor. Expressed in incipient leaf primordia.

It localises to the cell membrane. Its subcellular location is the cytoplasm. Functionally, may function as a signaling molecule by regulating the trafficking of other regulators. This chain is Multiple C2 domain and transmembrane region protein 13, found in Arabidopsis thaliana (Mouse-ear cress).